Reading from the N-terminus, the 494-residue chain is MTYDPENAMGEARADAPVEAEKEHEATQTTVKESTLGYDNSSDPSRRDSYRPTKLQSNLTIVSCYIANFSDGFQNSLANPTNVIFKKLLGTDGYPSEMQTRISNSLLIGAILGVLALGYTSDMFSRRAGLLFTSGLVAIGTLMSTLALQVHPTYNMLWYFVIVRGIAGFGVGGEYPPSAAAGIEESDDFKRKYRGPLFVSFTTLMATSAAPIQMIVYLICLIASNDNLPVTFHAIYSIATILPVIIMVLRFFMTDSTLFHYSNFKRQKRPLKFYLLLLKRYRWRLFTTSLAFFLYDFINFPNSIMSSTIINSLVKDHNIRTTAIWQVILGALPVPGVIVGAWLTNAIGRRYTGILGFAGYMVLGFVIGGTFPHLSKNMPAFVVLYGLLQALGHMGPGATIGLISTESFPTAMRGMGYSIATAFGRTGAAVGTQCFTPLQERAGKQSTFYLAGGIAILGMIVYWFLPESSELNLEEEDRDLSVFLAENGFPMEKA.

The interval 1-51 (MTYDPENAMGEARADAPVEAEKEHEATQTTVKESTLGYDNSSDPSRRDSYR) is disordered. Basic and acidic residues predominate over residues 12–26 (ARADAPVEAEKEHEA). Residues N40, N58, and N68 are each glycosylated (N-linked (GlcNAc...) asparagine). 10 helical membrane-spanning segments follow: residues 105–125 (SLLIGAILGVLALGYTSDMFS), 128–148 (AGLLFTSGLVAIGTLMSTLAL), 156–176 (MLWYFVIVRGIAGFGVGGEYP), 203–223 (TLMATSAAPIQMIVYLICLIA), 228–248 (LPVTFHAIYSIATILPVIIMV), 290–310 (LAFFLYDFINFPNSIMSSTII), 323–343 (AIWQVILGALPVPGVIVGAWL), 354–374 (ILGFAGYMVLGFVIGGTFPHL), 383–403 (VLYGLLQALGHMGPGATIGLI), and 446–466 (STFYLAGGIAILGMIVYWFLP).

It belongs to the major facilitator superfamily. Sugar transporter (TC 2.A.1.1) family.

Its subcellular location is the cell membrane. Functionally, MFS-type transporter; part of the lna gene cluster that mediates the biosynthesis of diastereomeric piperazines. Lna and lnb clusters encode sets of enzymes that produce overlapping sets of previously undescribed metabolites such as piperazinomycin-like metabolites or morpholine. The lna and lnb biosynthetic pathways appear to be part of a signaling network that controls the formation of sclerotia, a resilient overwintering structure. May be involved in the secretion of the metabolites produced by the lna and lnb clusters. This is MFS-type transporter lnaF from Aspergillus flavus (strain ATCC 200026 / FGSC A1120 / IAM 13836 / NRRL 3357 / JCM 12722 / SRRC 167).